Consider the following 154-residue polypeptide: Protein X (154 aa).

The tract at residues 68–117 is mitochondrial targeting sequence; that stretch reads PCALRFTSARRMETTVNTHMILPKVLHKRTLGLPAMSTIDLEAYFKDCLF.

It belongs to the orthohepadnavirus protein X family. In terms of assembly, may form homodimer. May interact with host CEBPA, CFLAR, CREB1, DDB1, E4F1, HBXIP, HSPD1/HSP60, NFKBIA, POLR2E and SMAD4. Interacts with host SMC5-SMC6 complex and induces its degradation. Interacts with host TRPC4AP; leading to prevent ubiquitination of TRPC4AP. Interacts with host PLSCR1; this interaction promotes ubiquitination and degradation of HBx and impairs HBx-mediated cell proliferation. Post-translationally, a fraction may be phosphorylated in insect cells and HepG2 cells, a human hepatoblastoma cell line. Phosphorylated in vitro by host protein kinase C or mitogen-activated protein kinase. N-acetylated in insect cells.

The protein localises to the host cytoplasm. The protein resides in the host nucleus. Its subcellular location is the host mitochondrion. Functionally, multifunctional protein that plays a role in silencing host antiviral defenses and promoting viral transcription. Does not seem to be essential for HBV infection. May be directly involved in development of cirrhosis and liver cancer (hepatocellular carcinoma). Most of cytosolic activities involve modulation of cytosolic calcium. The effect on apoptosis is controversial depending on the cell types in which the studies have been conducted. May induce apoptosis by localizing in mitochondria and causing loss of mitochondrial membrane potential. May also modulate apoptosis by binding host CFLAR, a key regulator of the death-inducing signaling complex (DISC). Promotes viral transcription by using the host E3 ubiquitin ligase DDB1 to target the SMC5-SMC6 complex to proteasomal degradation. This host complex would otherwise bind to viral episomal DNA, and prevents its transcription. Moderately stimulates transcription of many different viral and cellular transcription elements. Promoters and enhancers stimulated by HBx contain DNA binding sites for NF-kappa-B, AP-1, AP-2, c-EBP, ATF/CREB, or the calcium-activated factor NF-AT. This is Protein X from Hepatitis B virus genotype C subtype ayw (isolate Australia/AustRC/1992) (HBV-C).